The following is a 104-amino-acid chain: A-type ATP synthase subunit F (104 aa).

Belongs to the V-ATPase F subunit family. In terms of assembly, has multiple subunits with at least A(3), B(3), C, D, E, F, H, I and proteolipid K(x).

Its subcellular location is the cell membrane. In terms of biological role, component of the A-type ATP synthase that produces ATP from ADP in the presence of a proton gradient across the membrane. The chain is A-type ATP synthase subunit F from Thermoplasma acidophilum (strain ATCC 25905 / DSM 1728 / JCM 9062 / NBRC 15155 / AMRC-C165).